A 275-amino-acid polypeptide reads, in one-letter code: N-(5'-phosphoribosyl)anthranilate isomerase 2, chloroplastic (275 aa).

Residues 1 to 32 (MSTGISTDLHVHFGALNFSKTYKSGLSNRTVS) constitute a chloroplast transit peptide.

This sequence belongs to the TrpF family. Expressed in roots and shoots.

Its subcellular location is the plastid. It is found in the chloroplast. The enzyme catalyses N-(5-phospho-beta-D-ribosyl)anthranilate = 1-(2-carboxyphenylamino)-1-deoxy-D-ribulose 5-phosphate. The protein operates within amino-acid biosynthesis; L-tryptophan biosynthesis; L-tryptophan from chorismate: step 3/5. The polypeptide is N-(5'-phosphoribosyl)anthranilate isomerase 2, chloroplastic (PAI2) (Arabidopsis thaliana (Mouse-ear cress)).